Here is a 295-residue protein sequence, read N- to C-terminus: Acetylglutamate kinase (295 aa).

Residues 64 to 65 (GG), arginine 86, and asparagine 190 contribute to the substrate site.

Belongs to the acetylglutamate kinase family. ArgB subfamily.

The protein localises to the cytoplasm. It carries out the reaction N-acetyl-L-glutamate + ATP = N-acetyl-L-glutamyl 5-phosphate + ADP. Its pathway is amino-acid biosynthesis; L-arginine biosynthesis; N(2)-acetyl-L-ornithine from L-glutamate: step 2/4. In terms of biological role, catalyzes the ATP-dependent phosphorylation of N-acetyl-L-glutamate. The polypeptide is Acetylglutamate kinase (Pelotomaculum thermopropionicum (strain DSM 13744 / JCM 10971 / SI)).